The sequence spans 330 residues: L-lactate dehydrogenase (330 aa).

NAD(+) contacts are provided by residues V31, D52, K57, and 96–97 (GA). Residues Q99, R105, and 137–140 (NPVD) each bind substrate. NAD(+) is bound by residues 135–137 (VSN) and S160. 165 to 168 (DTAR) is a binding site for substrate. Beta-D-fructose 1,6-bisphosphate-binding residues include R170 and H185. The active-site Proton acceptor is H192. Phosphotyrosine is present on Y238. A substrate-binding site is contributed by T247.

This sequence belongs to the LDH/MDH superfamily. LDH family. Homotetramer.

Its subcellular location is the cytoplasm. It carries out the reaction (S)-lactate + NAD(+) = pyruvate + NADH + H(+). It functions in the pathway fermentation; pyruvate fermentation to lactate; (S)-lactate from pyruvate: step 1/1. With respect to regulation, allosterically activated by fructose 1,6-bisphosphate (FBP). In terms of biological role, catalyzes the conversion of lactate to pyruvate. This Gloeobacter violaceus (strain ATCC 29082 / PCC 7421) protein is L-lactate dehydrogenase.